Consider the following 41-residue polypeptide: Photosystem II reaction center protein Y (41 aa).

Residues 5 to 23 (VLIVLAPVIIAGSWALFNI) traverse the membrane as a helical segment.

The protein belongs to the PsbY family. As to quaternary structure, PSII is composed of 1 copy each of membrane proteins PsbA, PsbB, PsbC, PsbD, PsbE, PsbF, PsbH, PsbI, PsbJ, PsbK, PsbL, PsbM, PsbT, PsbX, PsbY, PsbZ, Psb30/Ycf12, peripheral proteins PsbO, CyanoQ (PsbQ), PsbU, PsbV and a large number of cofactors. It forms dimeric complexes.

It localises to the cellular thylakoid membrane. Its function is as follows. Loosely associated component of the core of photosystem II (PSII), it is not always seen in crystals. PSII is a light-driven water plastoquinone oxidoreductase, using light energy to abstract electrons from H(2)O, generating a proton gradient subsequently used for ATP formation. The sequence is that of Photosystem II reaction center protein Y from Gloeothece citriformis (strain PCC 7424) (Cyanothece sp. (strain PCC 7424)).